Reading from the N-terminus, the 405-residue chain is Bifunctional enzyme IspD/IspF (405 aa).

Residues 1 to 246 (MLQMPSKQPI…KLSASLLPDV (246 aa)) form a 2-C-methyl-D-erythritol 4-phosphate cytidylyltransferase region. The interval 247 to 405 (RTGNGYDVHQ…TATVVYRGRT (159 aa)) is 2-C-methyl-D-erythritol 2,4-cyclodiphosphate synthase. Residues aspartate 253 and histidine 255 each contribute to the a divalent metal cation site. 4-CDP-2-C-methyl-D-erythritol 2-phosphate contacts are provided by residues 253-255 (DVH) and 279-280 (HS). Histidine 287 serves as a coordination point for a divalent metal cation. 4-CDP-2-C-methyl-D-erythritol 2-phosphate contacts are provided by residues 301-303 (DIG), 377-380 (TTNE), phenylalanine 384, and arginine 387.

In the N-terminal section; belongs to the IspD/TarI cytidylyltransferase family. IspD subfamily. It in the C-terminal section; belongs to the IspF family. It depends on a divalent metal cation as a cofactor.

The enzyme catalyses 2-C-methyl-D-erythritol 4-phosphate + CTP + H(+) = 4-CDP-2-C-methyl-D-erythritol + diphosphate. The catalysed reaction is 4-CDP-2-C-methyl-D-erythritol 2-phosphate = 2-C-methyl-D-erythritol 2,4-cyclic diphosphate + CMP. It functions in the pathway isoprenoid biosynthesis; isopentenyl diphosphate biosynthesis via DXP pathway; isopentenyl diphosphate from 1-deoxy-D-xylulose 5-phosphate: step 2/6. Its pathway is isoprenoid biosynthesis; isopentenyl diphosphate biosynthesis via DXP pathway; isopentenyl diphosphate from 1-deoxy-D-xylulose 5-phosphate: step 4/6. Its function is as follows. Bifunctional enzyme that catalyzes the formation of 4-diphosphocytidyl-2-C-methyl-D-erythritol from CTP and 2-C-methyl-D-erythritol 4-phosphate (MEP) (IspD), and catalyzes the conversion of 4-diphosphocytidyl-2-C-methyl-D-erythritol 2-phosphate (CDP-ME2P) to 2-C-methyl-D-erythritol 2,4-cyclodiphosphate (ME-CPP) with a corresponding release of cytidine 5-monophosphate (CMP) (IspF). The protein is Bifunctional enzyme IspD/IspF of Rhizobium etli (strain CIAT 652).